The chain runs to 83 residues: Small ribosomal subunit protein eS21 (83 aa).

It belongs to the eukaryotic ribosomal protein eS21 family. In terms of assembly, component of the 40S small ribosomal subunit.

It localises to the cytoplasm. The protein resides in the cytosol. The protein localises to the rough endoplasmic reticulum. This is Small ribosomal subunit protein eS21 (RpS21) from Biphyllus lunatus (Beetle).